Here is a 460-residue protein sequence, read N- to C-terminus: Argininosuccinate lyase (460 aa).

This sequence belongs to the lyase 1 family. Argininosuccinate lyase subfamily.

It localises to the cytoplasm. The catalysed reaction is 2-(N(omega)-L-arginino)succinate = fumarate + L-arginine. It functions in the pathway amino-acid biosynthesis; L-arginine biosynthesis; L-arginine from L-ornithine and carbamoyl phosphate: step 3/3. The sequence is that of Argininosuccinate lyase from Nitratidesulfovibrio vulgaris (strain DSM 19637 / Miyazaki F) (Desulfovibrio vulgaris).